A 149-amino-acid chain; its full sequence is MQVILLDKVAQLGTVGDQVTVKAGFARNYLIPQGKAVMATAANIAHFEARRAELEAKAAEALSAAQARAAAIANLAAIVITSKAGDDGRLFGSVGVRDIAEAVSAAGVAVTKSEVRLPEGALRTIGEHEVKLHLHAEVNAVVTINVVSE.

This sequence belongs to the bacterial ribosomal protein bL9 family.

Its function is as follows. Binds to the 23S rRNA. This Glaesserella parasuis serovar 5 (strain SH0165) (Haemophilus parasuis) protein is Large ribosomal subunit protein bL9.